Consider the following 145-residue polypeptide: Small ribosomal subunit protein eS19 (145 aa).

Belongs to the eukaryotic ribosomal protein eS19 family. Part of the 30S ribosomal subunit.

May be involved in maturation of the 30S ribosomal subunit. This chain is Small ribosomal subunit protein eS19, found in Methanothermobacter thermautotrophicus (strain ATCC 29096 / DSM 1053 / JCM 10044 / NBRC 100330 / Delta H) (Methanobacterium thermoautotrophicum).